Consider the following 158-residue polypeptide: MVELLGIIRIRGWAKAPWYINETLEMLRLRYNFNTMMYPKTSQILGMLNKVSPYVTWGEIDPDTLKLLIIKRLETAKGDKVSDSYVKEVLKIENIDTMVKQLYEGKIYLHKLDQYFKLPIRLHPPKGGFKGSVKRPYKNKGEFGYRGNKINELMRRMM.

The protein belongs to the universal ribosomal protein uL30 family. Part of the 50S ribosomal subunit.

The sequence is that of Large ribosomal subunit protein uL30 from Saccharolobus islandicus (strain Y.G.57.14 / Yellowstone #1) (Sulfolobus islandicus).